A 132-amino-acid chain; its full sequence is Small ribosomal subunit protein uS8 (132 aa).

This sequence belongs to the universal ribosomal protein uS8 family. Part of the 30S ribosomal subunit. Contacts proteins S5 and S12.

In terms of biological role, one of the primary rRNA binding proteins, it binds directly to 16S rRNA central domain where it helps coordinate assembly of the platform of the 30S subunit. In Limosilactobacillus reuteri (strain DSM 20016) (Lactobacillus reuteri), this protein is Small ribosomal subunit protein uS8.